The primary structure comprises 342 residues: Succinylglutamate desuccinylase (342 aa).

Zn(2+) is bound by residues His-64, Glu-67, and His-159. Glu-222 is a catalytic residue.

The protein belongs to the AspA/AstE family. Succinylglutamate desuccinylase subfamily. It depends on Zn(2+) as a cofactor.

It carries out the reaction N-succinyl-L-glutamate + H2O = L-glutamate + succinate. It functions in the pathway amino-acid degradation; L-arginine degradation via AST pathway; L-glutamate and succinate from L-arginine: step 5/5. In terms of biological role, transforms N(2)-succinylglutamate into succinate and glutamate. The polypeptide is Succinylglutamate desuccinylase (Burkholderia orbicola (strain MC0-3)).